A 551-amino-acid chain; its full sequence is Putative transport protein HI_0035 (551 aa).

The next 5 helical transmembrane spans lie at 4–24 (IAIT…IGHW), 28–48 (GVGL…HFTN), 65–85 (FGLI…FFSS), 95–115 (AFAI…HKIA), and 157–177 (VSYA…MWLI). RCK C-terminal domains are found at residues 191-275 (RFNA…IIGH) and 277-360 (VDAP…VIGN). A run of 6 helical transmembrane segments spans residues 370–390 (MLPV…PFYI), 402–424 (AGGP…LYWF), 438–458 (IVLF…DTLV), 463–483 (LEWM…VGTI), 492–512 (YLTI…LAFA), and 529–549 (VYPL…VLLW).

The protein belongs to the AAE transporter (TC 2.A.81) family. YidE subfamily.

Its subcellular location is the cell membrane. The protein is Putative transport protein HI_0035 of Haemophilus influenzae (strain ATCC 51907 / DSM 11121 / KW20 / Rd).